Consider the following 158-residue polypeptide: Ribosomal RNA large subunit methyltransferase H (158 aa).

Residues leucine 74, glycine 105, and 124-129 (LGPLTL) contribute to the S-adenosyl-L-methionine site.

The protein belongs to the RNA methyltransferase RlmH family. As to quaternary structure, homodimer.

Its subcellular location is the cytoplasm. It catalyses the reaction pseudouridine(1915) in 23S rRNA + S-adenosyl-L-methionine = N(3)-methylpseudouridine(1915) in 23S rRNA + S-adenosyl-L-homocysteine + H(+). In terms of biological role, specifically methylates the pseudouridine at position 1915 (m3Psi1915) in 23S rRNA. The sequence is that of Ribosomal RNA large subunit methyltransferase H from Xylella fastidiosa (strain 9a5c).